Consider the following 129-residue polypeptide: Large ribosomal subunit protein uL22 (129 aa).

The protein belongs to the universal ribosomal protein uL22 family. In terms of assembly, part of the 50S ribosomal subunit.

Its function is as follows. This protein binds specifically to 23S rRNA; its binding is stimulated by other ribosomal proteins, e.g. L4, L17, and L20. It is important during the early stages of 50S assembly. It makes multiple contacts with different domains of the 23S rRNA in the assembled 50S subunit and ribosome. Functionally, the globular domain of the protein is located near the polypeptide exit tunnel on the outside of the subunit, while an extended beta-hairpin is found that lines the wall of the exit tunnel in the center of the 70S ribosome. This chain is Large ribosomal subunit protein uL22, found in Agrobacterium fabrum (strain C58 / ATCC 33970) (Agrobacterium tumefaciens (strain C58)).